The chain runs to 252 residues: Imidazole glycerol phosphate synthase subunit HisF (252 aa).

Residues Asp-11 and Asp-130 contribute to the active site.

It belongs to the HisA/HisF family. As to quaternary structure, heterodimer of HisH and HisF.

It localises to the cytoplasm. The enzyme catalyses 5-[(5-phospho-1-deoxy-D-ribulos-1-ylimino)methylamino]-1-(5-phospho-beta-D-ribosyl)imidazole-4-carboxamide + L-glutamine = D-erythro-1-(imidazol-4-yl)glycerol 3-phosphate + 5-amino-1-(5-phospho-beta-D-ribosyl)imidazole-4-carboxamide + L-glutamate + H(+). It participates in amino-acid biosynthesis; L-histidine biosynthesis; L-histidine from 5-phospho-alpha-D-ribose 1-diphosphate: step 5/9. Functionally, IGPS catalyzes the conversion of PRFAR and glutamine to IGP, AICAR and glutamate. The HisF subunit catalyzes the cyclization activity that produces IGP and AICAR from PRFAR using the ammonia provided by the HisH subunit. The polypeptide is Imidazole glycerol phosphate synthase subunit HisF (Rhodospirillum rubrum (strain ATCC 11170 / ATH 1.1.1 / DSM 467 / LMG 4362 / NCIMB 8255 / S1)).